The sequence spans 225 residues: Holliday junction branch migration complex subunit RuvA (225 aa).

The tract at residues 1-71 is domain I; sequence MISWINGDLV…EDSDLLFGFT (71 aa). A domain II region spans residues 72-150; it reads SNEQKNFFIE…SEILSEEEKS (79 aa). The flexible linker stretch occupies residues 151–161; sequence KGELEIKDPEI. The segment at 161–225 is domain III; it reads INKMIEDLQL…LDEDSSNIAR (65 aa).

It belongs to the RuvA family. Homotetramer. Forms an RuvA(8)-RuvB(12)-Holliday junction (HJ) complex. HJ DNA is sandwiched between 2 RuvA tetramers; dsDNA enters through RuvA and exits via RuvB. An RuvB hexamer assembles on each DNA strand where it exits the tetramer. Each RuvB hexamer is contacted by two RuvA subunits (via domain III) on 2 adjacent RuvB subunits; this complex drives branch migration. In the full resolvosome a probable DNA-RuvA(4)-RuvB(12)-RuvC(2) complex forms which resolves the HJ.

It localises to the cytoplasm. The RuvA-RuvB-RuvC complex processes Holliday junction (HJ) DNA during genetic recombination and DNA repair, while the RuvA-RuvB complex plays an important role in the rescue of blocked DNA replication forks via replication fork reversal (RFR). RuvA specifically binds to HJ cruciform DNA, conferring on it an open structure. The RuvB hexamer acts as an ATP-dependent pump, pulling dsDNA into and through the RuvAB complex. HJ branch migration allows RuvC to scan DNA until it finds its consensus sequence, where it cleaves and resolves the cruciform DNA. This chain is Holliday junction branch migration complex subunit RuvA, found in Prochlorococcus marinus (strain MIT 9301).